The chain runs to 42 residues: Omega-theraphotoxin-Asp3a (42 aa).

Cystine bridges form between cysteine 1–cysteine 16, cysteine 8–cysteine 21, and cysteine 15–cysteine 30.

The protein belongs to the neurotoxin 14 (magi-1) family. 08 (Ltx-4) subfamily. In terms of tissue distribution, expressed by the venom gland.

It localises to the secreted. Functionally, inhibits voltage-gated calcium channels (Cav) in rat cerebellar granule cells. The protein is Omega-theraphotoxin-Asp3a of Aphonopelma sp. (American tarantula).